A 113-amino-acid polypeptide reads, in one-letter code: UPF0251 protein TK0562 (113 aa).

It belongs to the UPF0251 family.

The chain is UPF0251 protein TK0562 from Thermococcus kodakarensis (strain ATCC BAA-918 / JCM 12380 / KOD1) (Pyrococcus kodakaraensis (strain KOD1)).